The following is a 430-amino-acid chain: Glutamate-1-semialdehyde 2,1-aminomutase (430 aa).

Residue Lys265 is modified to N6-(pyridoxal phosphate)lysine.

Belongs to the class-III pyridoxal-phosphate-dependent aminotransferase family. HemL subfamily. Homodimer. The cofactor is pyridoxal 5'-phosphate.

The protein localises to the cytoplasm. It carries out the reaction (S)-4-amino-5-oxopentanoate = 5-aminolevulinate. The protein operates within porphyrin-containing compound metabolism; protoporphyrin-IX biosynthesis; 5-aminolevulinate from L-glutamyl-tRNA(Glu): step 2/2. The sequence is that of Glutamate-1-semialdehyde 2,1-aminomutase from Shewanella baltica (strain OS195).